Reading from the N-terminus, the 447-residue chain is Chromosomal replication initiator protein DnaA (447 aa).

Residues 1-66 (MSNRIISILK…SKAIKEAYGK (66 aa)) form a domain I, interacts with DnaA modulators region. The segment at 66–102 (KNLDYEIVYETTEPEAFNKSNESYKGPLVKKKPLLIS) is domain II. A domain III, AAA+ region region spans residues 103–319 (NLNANYTFEN…GVIIKLIVQS (217 aa)). Positions 146, 148, 149, and 150 each coordinate ATP. The tract at residues 320 to 447 (SINKERIGAA…NTMATSSAAG (128 aa)) is domain IV, binds dsDNA.

This sequence belongs to the DnaA family. Oligomerizes as a right-handed, spiral filament on DNA at oriC.

It is found in the cytoplasm. Its function is as follows. Plays an essential role in the initiation and regulation of chromosomal replication. ATP-DnaA binds to the origin of replication (oriC) to initiate formation of the DNA replication initiation complex once per cell cycle. Binds the DnaA box (a 9 base pair repeat at the origin) and separates the double-stranded (ds)DNA. Forms a right-handed helical filament on oriC DNA; dsDNA binds to the exterior of the filament while single-stranded (ss)DNA is stabiized in the filament's interior. The ATP-DnaA-oriC complex binds and stabilizes one strand of the AT-rich DNA unwinding element (DUE), permitting loading of DNA polymerase. After initiation quickly degrades to an ADP-DnaA complex that is not apt for DNA replication. Binds acidic phospholipids. This chain is Chromosomal replication initiator protein DnaA, found in Kosmotoga olearia (strain ATCC BAA-1733 / DSM 21960 / TBF 19.5.1).